A 678-amino-acid polypeptide reads, in one-letter code: MTQIKPEVKRTEELRQLLQQASYAYYVLDTPIMEDSVYDQLYRELQQLEIQYPELTAPDSPTQRVGERPATQFTSVRHNIPLYSLENAFNIDELQGWDQRWRRQVPKIDSVEYVTELKIDGSALALTYQDGILVRGTTRGDGVMGEDITQNVRTIRSIPLRLNFEGLEILERVEVRGEAFLPLEVFKQINEERQKAGEQLFANPRNAAAGTLRQLDSRIVAKRRLAFFGYTLHIPGRDDTSIANTQWEALELLEKMGFQVNPNHKLCASIAEVAKYYEYWDTERLNLPYMTDGVVVKLNSFKLQEQLGFTQKFPRWAIALKYPAEEAPTRVENIAVNVGRTGALTPLAEMRPVQLAGTTVSRATLHNSDRIAQLDIRIGDTVIVRKAGEIIPEVVRVLKELRPAETEPFVMPTHCPVCDQAVVRESGEAVTRCVNASCAAILKGSIEHWVSRDALDIKGLGEKLVHQLVDKVLVHSVADLYELTAEKLCALERMGQKSAEKLVDAIAQSKNQPWSRVLYGLGIRHVGSVNAQLLTQKYFTVEQLATAKQSDIEGIYGIGAEIAQSVYQWFRIDANQRLIERLQAEGLQLTAPEETKAFGDGNQIFAGKTFVVTGTLPTLKRDEAKALIQKAGGKVTDSVSKKTDYLVVGEDAGSKLEKALSLGITQLSEAQLLEMLNE.

NAD(+) is bound by residues 35 to 39, 84 to 85, and Glu-116; these read DSVYD and SL. Residue Lys-118 is the N6-AMP-lysine intermediate of the active site. The NAD(+) site is built by Arg-139, Glu-178, Lys-297, and Lys-321. Residues Cys-415, Cys-418, Cys-433, and Cys-438 each coordinate Zn(2+). Residues 600–678 form the BRCT domain; the sequence is DGNQIFAGKT…EAQLLEMLNE (79 aa).

It belongs to the NAD-dependent DNA ligase family. LigA subfamily. Requires Mg(2+) as cofactor. It depends on Mn(2+) as a cofactor.

The catalysed reaction is NAD(+) + (deoxyribonucleotide)n-3'-hydroxyl + 5'-phospho-(deoxyribonucleotide)m = (deoxyribonucleotide)n+m + AMP + beta-nicotinamide D-nucleotide.. Functionally, DNA ligase that catalyzes the formation of phosphodiester linkages between 5'-phosphoryl and 3'-hydroxyl groups in double-stranded DNA using NAD as a coenzyme and as the energy source for the reaction. It is essential for DNA replication and repair of damaged DNA. This is DNA ligase from Nostoc punctiforme (strain ATCC 29133 / PCC 73102).